A 236-amino-acid chain; its full sequence is Phosphoribosylaminoimidazole-succinocarboxamide synthase (236 aa).

Belongs to the SAICAR synthetase family.

The enzyme catalyses 5-amino-1-(5-phospho-D-ribosyl)imidazole-4-carboxylate + L-aspartate + ATP = (2S)-2-[5-amino-1-(5-phospho-beta-D-ribosyl)imidazole-4-carboxamido]succinate + ADP + phosphate + 2 H(+). It participates in purine metabolism; IMP biosynthesis via de novo pathway; 5-amino-1-(5-phospho-D-ribosyl)imidazole-4-carboxamide from 5-amino-1-(5-phospho-D-ribosyl)imidazole-4-carboxylate: step 1/2. This chain is Phosphoribosylaminoimidazole-succinocarboxamide synthase, found in Rickettsia felis (strain ATCC VR-1525 / URRWXCal2) (Rickettsia azadi).